The chain runs to 143 residues: Ribonuclease P protein component 2 (143 aa).

The protein belongs to the eukaryotic/archaeal RNase P protein component 2 family. As to quaternary structure, consists of a catalytic RNA component and at least 4-5 protein subunits.

It is found in the cytoplasm. It catalyses the reaction Endonucleolytic cleavage of RNA, removing 5'-extranucleotides from tRNA precursor.. In terms of biological role, part of ribonuclease P, a protein complex that generates mature tRNA molecules by cleaving their 5'-ends. The sequence is that of Ribonuclease P protein component 2 from Saccharolobus islandicus (strain Y.N.15.51 / Yellowstone #2) (Sulfolobus islandicus).